The chain runs to 151 residues: 3-hydroxyacyl-[acyl-carrier-protein] dehydratase FabZ (151 aa).

Residue histidine 57 is part of the active site.

Belongs to the thioester dehydratase family. FabZ subfamily.

The protein localises to the cytoplasm. The enzyme catalyses a (3R)-hydroxyacyl-[ACP] = a (2E)-enoyl-[ACP] + H2O. In terms of biological role, involved in unsaturated fatty acids biosynthesis. Catalyzes the dehydration of short chain beta-hydroxyacyl-ACPs and long chain saturated and unsaturated beta-hydroxyacyl-ACPs. The polypeptide is 3-hydroxyacyl-[acyl-carrier-protein] dehydratase FabZ (Tolumonas auensis (strain DSM 9187 / NBRC 110442 / TA 4)).